A 490-amino-acid chain; its full sequence is Probable alcohol acetyltransferase FCK4 (490 aa).

The protein belongs to the alcohol acetyltransferase FCK4 family.

It participates in secondary metabolite biosynthesis. In terms of biological role, probable alcohol acetyltransferase; part of the gene cluster that mediates the biosynthesis of cytokinins such as fusatin, fusatinic acids or 8-oxofusatin, known for their growth promoting and anti-senescence activities toward host plants. FCK1 is a bifunctional enzyme that performs the first steps in the biosynthesis of Fusarium cytokinins. It first condenses adenosine monophosphate (AMP) with dimethylallyl diphosphate (DMAPP) to yield isoprenyl adenosine monophosphate. It then catalyzes the removal of the phosphoribose to produce isopentenylaldehyde. The cytochrome P450 monooxygenase then converts isopentenylaldehyde to trans-zeatin. A condensation step converts trans-zeatin to fusatin which is further modified to produce fusatinic acid. The mechanism for oxidation of fusatin to fusatinic acid remains unknown. 8-oxofusatin could be produced through several pathways, via direct oxygenation of fusatin, or via the 8-oxo-pentenyladenine intermediate which itself must arise from either the prenylation of 8-oxo-AMP by FCK1 and/or oxygenation of isopentenylaldehyde. Both the FCK3 and FCK4 enzymes act downstream of the identified cytokinins to produce yet unidentified compounds. This Fusarium pseudograminearum (strain CS3096) (Wheat and barley crown-rot fungus) protein is Probable alcohol acetyltransferase FCK4.